We begin with the raw amino-acid sequence, 117 residues long: Large ribosomal subunit protein bL19 (117 aa).

The protein belongs to the bacterial ribosomal protein bL19 family.

This protein is located at the 30S-50S ribosomal subunit interface and may play a role in the structure and function of the aminoacyl-tRNA binding site. The chain is Large ribosomal subunit protein bL19 from Colwellia psychrerythraea (strain 34H / ATCC BAA-681) (Vibrio psychroerythus).